Consider the following 187-residue polypeptide: Ribosome-recycling factor (187 aa).

Belongs to the RRF family.

The protein localises to the cytoplasm. In terms of biological role, responsible for the release of ribosomes from messenger RNA at the termination of protein biosynthesis. May increase the efficiency of translation by recycling ribosomes from one round of translation to another. This is Ribosome-recycling factor from Anaeromyxobacter sp. (strain Fw109-5).